The following is a 155-amino-acid chain: Ribonuclease H (155 aa).

Residues 5–146 (LAEVVEIFTD…ADMLANRGVQ (142 aa)) enclose the RNase H type-1 domain. Residues Asp14, Glu52, Asp74, and Asp138 each coordinate Mg(2+).

It belongs to the RNase H family. Monomer. The cofactor is Mg(2+).

It localises to the cytoplasm. The catalysed reaction is Endonucleolytic cleavage to 5'-phosphomonoester.. Endonuclease that specifically degrades the RNA of RNA-DNA hybrids. This is Ribonuclease H from Nitrosospira multiformis (strain ATCC 25196 / NCIMB 11849 / C 71).